The primary structure comprises 430 residues: T-kininogen 1 (430 aa).

A signal peptide spans 1–18 (MKLITILLLCSRLLPSLA). Glutamine 19 bears the Pyrrolidone carboxylic acid mark. In terms of domain architecture, Cystatin kininogen-type 1 spans 28-131 (CNDETVFQAV…TQICNITPGK (104 aa)). Cystine bridges form between cysteine 28–cysteine 404, cysteine 83–cysteine 94, cysteine 107–cysteine 125, cysteine 141–cysteine 144, cysteine 205–cysteine 217, cysteine 228–cysteine 247, cysteine 263–cysteine 266, cysteine 327–cysteine 339, and cysteine 350–cysteine 369. The N-linked (GlcNAc...) asparagine glycan is linked to asparagine 82. Positions 150-253 (MDSSDLKPVL…SQSCDLYPGD (104 aa)) constitute a Cystatin kininogen-type 2 domain. N-linked (GlcNAc...) asparagine glycans are attached at residues asparagine 168 and asparagine 204. The region spanning 272–375 (VDSPELKEAL…TVRCQALDMM (104 aa)) is the Cystatin kininogen-type 3 domain. N-linked (GlcNAc...) asparagine glycosylation occurs at asparagine 326. The interval 411 to 430 (SKARAGPAPDHQAEASTVTP) is disordered.

Post-translationally, as T-kinin is preceded by a Met instead of an Arg or Lys, it is not released from its precursor by either tissue or plasma kallikrein. Plasma.

It localises to the secreted. The protein resides in the extracellular space. In terms of biological role, kininogens are plasma glycoproteins with a number of functions: (1) as precursor of the active peptide bradykinin they effect smooth muscle contraction, induction of hypotension and increase of vascular permeability. (2) They play a role in blood coagulation by helping to position optimally prekallikrein and factor XI next to factor XII. (3) They are inhibitor of thiol proteases. This is T-kininogen 1 (Map1) from Rattus norvegicus (Rat).